The following is a 37-amino-acid chain: Alpha-conotoxin LvIA (37 aa).

Positions 1-20 (FRGRDAAAKASGLVGLTDRR) are excised as a propeptide. 2 disulfide bridges follow: C22/C28 and C23/C36. The ser-Xaa-Pro motif, crucial for potent interaction with nAChR stretch occupies residues 24–26 (SHP). Residue C36 is modified to Cysteine amide.

It belongs to the conotoxin A superfamily. As to expression, expressed by the venom duct.

It localises to the secreted. Alpha-conotoxins act on postsynaptic membranes, they bind to the nicotinic acetylcholine receptors (nAChR) and thus inhibit them. This toxin blocks alpha-3-beta-2/CHRNA3-CHRNB2 nAChR with high selectivity (IC(50)=8.67 nM (on rat) and 17.5 (on human)). Also has weaker activity on alpha-6/alpha-3-beta-2-beta-3 (CHRNA6/CHRNA3-CHRNB2-CHRNB3) (IC(50)=108 nM (on rat)), alpha-6/alpha-3-beta-4 (CHRNA6/CHRNA3-CHRNB4) (IC(50)=121 nM (on rat)), alpha-3-beta-4 (CHRNA3-CHRNB4) (IC(50)=148 nM (on rat)), and alpha-7/CHRNA7 nAChRs (IC(50)=3000 nM (on rat)). When tested on mouse with hot-plate tests, this toxin significantly increases the base pain threshold and shows analgesic effects. This Conus lividus (Livid cone) protein is Alpha-conotoxin LvIA.